Consider the following 425-residue polypeptide: Serine--tRNA ligase (425 aa).

227 to 229 (TAE) lines the L-serine pocket. ATP contacts are provided by residues 258–260 (RRE) and Val274. Position 281 (Glu281) interacts with L-serine. Residue 347 to 350 (ETHS) participates in ATP binding. Thr382 provides a ligand contact to L-serine.

It belongs to the class-II aminoacyl-tRNA synthetase family. Type-1 seryl-tRNA synthetase subfamily. Homodimer. The tRNA molecule binds across the dimer.

The protein localises to the cytoplasm. It carries out the reaction tRNA(Ser) + L-serine + ATP = L-seryl-tRNA(Ser) + AMP + diphosphate + H(+). It catalyses the reaction tRNA(Sec) + L-serine + ATP = L-seryl-tRNA(Sec) + AMP + diphosphate + H(+). Its pathway is aminoacyl-tRNA biosynthesis; selenocysteinyl-tRNA(Sec) biosynthesis; L-seryl-tRNA(Sec) from L-serine and tRNA(Sec): step 1/1. Catalyzes the attachment of serine to tRNA(Ser). Is also able to aminoacylate tRNA(Sec) with serine, to form the misacylated tRNA L-seryl-tRNA(Sec), which will be further converted into selenocysteinyl-tRNA(Sec). The protein is Serine--tRNA ligase of Deinococcus radiodurans (strain ATCC 13939 / DSM 20539 / JCM 16871 / CCUG 27074 / LMG 4051 / NBRC 15346 / NCIMB 9279 / VKM B-1422 / R1).